The sequence spans 142 residues: Small ribosomal subunit protein uS9 (142 aa).

The interval 117 to 142 (KGDPRRTEHKKPGIKHARSKRQKAYR) is disordered. Residues 123-142 (TEHKKPGIKHARSKRQKAYR) are compositionally biased toward basic residues.

This sequence belongs to the universal ribosomal protein uS9 family.

This is Small ribosomal subunit protein uS9 from Pyrobaculum aerophilum (strain ATCC 51768 / DSM 7523 / JCM 9630 / CIP 104966 / NBRC 100827 / IM2).